Here is a 389-residue protein sequence, read N- to C-terminus: MEVMRVLHMNKGNGETSYAKNSTAQSNIISLGRRVMDEALKKLMMSNSEISSIGIADLGCSSGPNSLLSISNIVDTIHNLCPDLDRPVPELRVSLNDLPSNDFNYICASLPEFYDRVNNNKEGLGFGRGGGESCFVSAVPGSFYGRLFPRRSLHFVHSSSSLHWLSQVPCREAEKEDRTITADLENMGKIYISKTSPKSAHKAYALQFQTDFWVFLRSRSEELVPGGRMVLSFLGRRSLDPTTEESCYQWELLAQALMSMAKEGIIEEEKIDAFNAPYYAASSEELKMVIEKEGSFSIDRLEISPIDWEGGSISEESYDLVIRSKPEALASGRRVSNTIRAVVEPMLEPTFGENVMDELFERYAKIVGEYFYVSSPRYAIVILSLVRAG.

Tyr18 is an S-adenosyl-L-homocysteine binding site. A jasmonate-binding site is contributed by Gln25. Positions 60, 65, 97, 98, 142, and 143 each coordinate S-adenosyl-L-homocysteine. Jasmonate-binding residues include His163 and Trp164. The Mg(2+) site is built by Asn186, Asp272, Phe274, and Asn275.

The protein belongs to the methyltransferase superfamily. Type-7 methyltransferase family. It depends on Mg(2+) as a cofactor. In terms of tissue distribution, expressed in rosettes, cauline leaves and developing flowers but not in young seedlings.

It is found in the cytoplasm. Its subcellular location is the nucleus. The catalysed reaction is jasmonate + S-adenosyl-L-methionine = methyl (-)-jasmonate + S-adenosyl-L-homocysteine. The protein operates within lipid metabolism; oxylipin biosynthesis. In terms of biological role, catalyzes the methylation of jasmonate into methyljasmonate, a plant volatile that acts as an important cellular regulator mediating diverse developmental processes and defense responses. The polypeptide is Jasmonate O-methyltransferase (Arabidopsis thaliana (Mouse-ear cress)).